We begin with the raw amino-acid sequence, 298 residues long: Proton-activated chloride channel (298 aa).

The Cytoplasmic portion of the chain corresponds to 1-12; sequence MPIGFNKACLKN. The helical transmembrane segment at 13-33 threads the bilayer; the sequence is VFTVILVLIYLALTAVAVFLA. Residues 34–245 are Extracellular-facing; that stretch reads YQTISDFMDK…RDPFIQQVKD (212 aa). Residues 246–266 form a helical membrane-spanning segment; sequence IVTANPWNTIAILCGVFMALF. The Cytoplasmic portion of the chain corresponds to 267-298; it reads KAADFAKLSIKWMIRIRKRHIRAKMREMNQIS.

The protein belongs to the proton-activated chloride channel family.

It localises to the cell membrane. The catalysed reaction is chloride(in) = chloride(out). Chloride channel gated by pH that facilitates the entry of chloride ions into cells upon exposure to extracellular acidic pH. Displays channel activity with distinct kinetic properties compared to the human ortholog channel. The protein is Proton-activated chloride channel of Danio rerio (Zebrafish).